The primary structure comprises 316 residues: Acetyl-coenzyme A carboxylase carboxyl transferase subunit beta (316 aa).

The CoA carboxyltransferase N-terminal domain occupies 29-298 (LWTKCPNCGV…LLSPLNSHHH (270 aa)). C33, C36, C52, and C55 together coordinate Zn(2+). The segment at 33 to 55 (CPNCGVLAYTKDLLANQLVCLDC) adopts a C4-type zinc-finger fold.

Belongs to the AccD/PCCB family. In terms of assembly, acetyl-CoA carboxylase is a heterohexamer composed of biotin carboxyl carrier protein (AccB), biotin carboxylase (AccC) and two subunits each of ACCase subunit alpha (AccA) and ACCase subunit beta (AccD). Zn(2+) is required as a cofactor.

The protein resides in the cytoplasm. It carries out the reaction N(6)-carboxybiotinyl-L-lysyl-[protein] + acetyl-CoA = N(6)-biotinyl-L-lysyl-[protein] + malonyl-CoA. It functions in the pathway lipid metabolism; malonyl-CoA biosynthesis; malonyl-CoA from acetyl-CoA: step 1/1. In terms of biological role, component of the acetyl coenzyme A carboxylase (ACC) complex. Biotin carboxylase (BC) catalyzes the carboxylation of biotin on its carrier protein (BCCP) and then the CO(2) group is transferred by the transcarboxylase to acetyl-CoA to form malonyl-CoA. The chain is Acetyl-coenzyme A carboxylase carboxyl transferase subunit beta from Microcystis aeruginosa (strain NIES-843 / IAM M-2473).